A 35-amino-acid chain; its full sequence is Photosystem II reaction center protein T (35 aa).

A helical transmembrane segment spans residues 3–23; sequence ALVYTFLLVSTLGIIFFAIFF.

This sequence belongs to the PsbT family. As to quaternary structure, PSII is composed of 1 copy each of membrane proteins PsbA, PsbB, PsbC, PsbD, PsbE, PsbF, PsbH, PsbI, PsbJ, PsbK, PsbL, PsbM, PsbT, PsbY, PsbZ, Psb30/Ycf12, at least 3 peripheral proteins of the oxygen-evolving complex and a large number of cofactors. It forms dimeric complexes.

The protein localises to the plastid. It localises to the chloroplast thylakoid membrane. Found at the monomer-monomer interface of the photosystem II (PS II) dimer, plays a role in assembly and dimerization of PSII. PSII is a light-driven water plastoquinone oxidoreductase, using light energy to abstract electrons from H(2)O, generating a proton gradient subsequently used for ATP formation. This chain is Photosystem II reaction center protein T, found in Gossypium barbadense (Sea Island cotton).